Reading from the N-terminus, the 439-residue chain is Protein translocase subunit SecY (439 aa).

Transmembrane regions (helical) follow at residues isoleucine 23–glycine 43, isoleucine 77–leucine 97, leucine 125–methionine 145, phenylalanine 154–leucine 174, isoleucine 187–isoleucine 207, isoleucine 217–isoleucine 237, valine 274–phenylalanine 294, tyrosine 317–phenylalanine 337, isoleucine 369–glutamate 389, and valine 397–isoleucine 417.

It belongs to the SecY/SEC61-alpha family. Component of the Sec protein translocase complex. Heterotrimer consisting of SecY, SecE and SecG subunits. The heterotrimers can form oligomers, although 1 heterotrimer is thought to be able to translocate proteins. Interacts with the ribosome. Interacts with SecDF, and other proteins may be involved. Interacts with SecA.

The protein localises to the cell membrane. Functionally, the central subunit of the protein translocation channel SecYEG. Consists of two halves formed by TMs 1-5 and 6-10. These two domains form a lateral gate at the front which open onto the bilayer between TMs 2 and 7, and are clamped together by SecE at the back. The channel is closed by both a pore ring composed of hydrophobic SecY resides and a short helix (helix 2A) on the extracellular side of the membrane which forms a plug. The plug probably moves laterally to allow the channel to open. The ring and the pore may move independently. This chain is Protein translocase subunit SecY, found in Buchnera aphidicola subsp. Schizaphis graminum (strain Sg).